The sequence spans 459 residues: Ribulose bisphosphate carboxylase large chain (459 aa).

Residue Lys4 is modified to N6,N6,N6-trimethyllysine. Residues Asn113 and Thr163 each contribute to the substrate site. Lys165 acts as the Proton acceptor in catalysis. Lys167 lines the substrate pocket. Lys191, Asp193, and Glu194 together coordinate Mg(2+). N6-carboxylysine is present on Lys191. His284 functions as the Proton acceptor in the catalytic mechanism. Residues Arg285, His317, and Ser369 each coordinate substrate.

This sequence belongs to the RuBisCO large chain family. Type I subfamily. As to quaternary structure, heterohexadecamer of 8 large chains and 8 small chains; disulfide-linked. The disulfide link is formed within the large subunit homodimers. Requires Mg(2+) as cofactor. In terms of processing, the disulfide bond which can form in the large chain dimeric partners within the hexadecamer appears to be associated with oxidative stress and protein turnover.

The protein localises to the plastid. The protein resides in the chloroplast. It carries out the reaction 2 (2R)-3-phosphoglycerate + 2 H(+) = D-ribulose 1,5-bisphosphate + CO2 + H2O. The catalysed reaction is D-ribulose 1,5-bisphosphate + O2 = 2-phosphoglycolate + (2R)-3-phosphoglycerate + 2 H(+). RuBisCO catalyzes two reactions: the carboxylation of D-ribulose 1,5-bisphosphate, the primary event in carbon dioxide fixation, as well as the oxidative fragmentation of the pentose substrate in the photorespiration process. Both reactions occur simultaneously and in competition at the same active site. The chain is Ribulose bisphosphate carboxylase large chain from Nyssa ogeche (Ogeechee tupelo).